Reading from the N-terminus, the 838-residue chain is U1 SNP1-associating protein 1 (838 aa).

Over 1 to 536 (MSEYLAQTPC…VRPLRNSFPL (536 aa)) the chain is Cytoplasmic. Residues 31-240 (HPLSTVGRLL…DFAPAHNSFF (210 aa)) are required for ERAD-L function. The Ubiquitin-like domain occupies 259–318 (ERFVLEFISDATLSITQMNVKPDTTVKQVKDFICSVYTHSLNLRRNDIKLIYKGQLLHEN). An important for HRD1 oligomer formation region spans residues 319–418 (NFAGNSSKIS…VPTDELYRKC (100 aa)). An interaction with HRD1 region spans residues 345–535 (QEYTESGPGF…VVRPLRNSFP (191 aa)). Ser374, Ser376, and Ser379 each carry phosphoserine. Residues 437–490 (SSYLSVIKGDYGEIKIPISSNDYRINGDNILLSPSAIEQLESALNFKIERPRDS) form a required for ERAD-L function and HRD1 oligomer formation region. A helical transmembrane segment spans residues 537-559 (LLVLIRTFYLIGYNSLVPFFIIL). The Extracellular segment spans residues 560 to 563 (EFGS). Residues 564-583 (FLPWKYIILLSLLFIFRTVW) traverse the membrane as a helical segment. Over 584-838 (NTQEVWNLWR…QPHLYIPDED (255 aa)) the chain is Cytoplasmic. The segment at 584 to 838 (NTQEVWNLWR…QPHLYIPDED (255 aa)) is interaction with DER1. The disordered stretch occupies residues 795–838 (ARDREQPAPSAQQQENEDEALIIPDEEEPTATGAQPHLYIPDED). Residues 809 to 823 (ENEDEALIIPDEEEP) show a composition bias toward acidic residues.

Component of the HRD1 ubiquitin ligase complex which contains the E3 ligase HRD1, its cofactors HRD3, USA1 and DER1, substrate recruiting factor YOS9 and CDC48-binding protein UBX2. Within the complex, interacts directly with HRD1 (via N-terminus) and DER1 (via C-terminus) and indirectly with HRD3. In ERAD-L, HRD3 and YOS9 jointly bind misfolded glycoproteins in the endoplasmic reticulum (ER) lumen. Movement of ERAD-L substrates through the ER membrane is facilitated by HRD1 and DER1 which have lateral gates facing each other and which distort the membrane region between the lateral gates, making it much thinner than a normal phospholipid bilayer. Substrates insert into the membrane as a hairpin loop with one strand interacting with DER1 and the other with HRD1. The HRD1 complex interacts with the heterotrimeric CDC48-NPL4-UFD1 ATPase complex which is recruited by UBX2 via its interaction with CDC48 and which moves ubiquitinated substrates to the cytosol for targeting to the proteasome.

It localises to the endoplasmic reticulum membrane. Its function is as follows. Scaffold protein of the endoplasmic reticulum-associated degradation (ERAD) (also known as endoplasmic reticulum quality control, ERQC) pathway involved in ubiquitin-dependent degradation of misfolded endoplasmic reticulum proteins. Component of the HRD1 ubiquitin ligase complex, which is part of the ERAD-L and ERAD-M pathways responsible for the rapid degradation of soluble lumenal and membrane proteins with misfolded lumenal domains (ERAD-L), or ER-membrane proteins with misfolded transmembrane domains (ERAD-M). Has multiple functions in ERAD including recruitment of DER1 to the HRD1 ubiquitin ligase, and regulation of HRD1 activity. Involved in oligomerization of HRD1 and in HRD1 autoubiquitination and degradation. In Saccharomyces cerevisiae (strain ATCC 204508 / S288c) (Baker's yeast), this protein is U1 SNP1-associating protein 1 (USA1).